A 422-amino-acid polypeptide reads, in one-letter code: MERLTSPPRLMIVSDLDHTMVDHHDPENLSLLRFNSLWEHAYRHDSLLVFSTGRSPTLYKELRKEKPLLTPDITIMSVGTEITYGNSMVPDHGWVEALNNKWDLGIVKQEASNFPELKLQAETEQRPHKVSFYVEKSKAQEVTKELSQRFLKRGLDVKIIYSGGMDLDILPQGAGKGQALAYLLKKLKTEGKLPVNTLACGDSGNDAELFSIPDVYGVMVSNAQEELLKWHAENAKDNPKVIHAKERCAGGIIQAIGHFKLGPNLSPRDVSDFLEIKVENVNPGHEVVKFFLFYERWRRGEVENSEAYTASLKASVHPGGVFVHPSGTEKSLRDTIDELRKYHGDKQGKKFRVWADQVLATDTTPGTWIVKLDKWEQDGDERRCCTTTVKFTSKEGEGLVWEHVQQTWSKETMVKDDSSWII.

This sequence belongs to the sucrose phosphatase family. As to quaternary structure, homodimer. Requires Mg(2+) as cofactor.

It carries out the reaction sucrose 6(F)-phosphate + H2O = sucrose + phosphate. The protein operates within glycan biosynthesis; sucrose biosynthesis; sucrose from D-fructose 6-phosphate and UDP-alpha-D-glucose: step 2/2. Functionally, catalyzes the final step of sucrose synthesis. The chain is Probable sucrose-phosphatase 2 (SPP2) from Arabidopsis thaliana (Mouse-ear cress).